Here is a 312-residue protein sequence, read N- to C-terminus: Malate dehydrogenase (312 aa).

NAD(+) is bound by residues 7 to 13 (GASGGIG) and Asp34. Arg81 and Arg87 together coordinate substrate. Residues Asn94 and 117–119 (ITN) contribute to the NAD(+) site. Substrate contacts are provided by Asn119 and Arg153. Catalysis depends on His177, which acts as the Proton acceptor. Residue Met227 coordinates NAD(+).

The protein belongs to the LDH/MDH superfamily. MDH type 1 family. In terms of assembly, homodimer.

It carries out the reaction (S)-malate + NAD(+) = oxaloacetate + NADH + H(+). Its function is as follows. Catalyzes the reversible oxidation of malate to oxaloacetate. The polypeptide is Malate dehydrogenase (Actinobacillus succinogenes (strain ATCC 55618 / DSM 22257 / CCUG 43843 / 130Z)).